The following is a 210-amino-acid chain: Imidazoleglycerol-phosphate dehydratase (210 aa).

Belongs to the imidazoleglycerol-phosphate dehydratase family.

It carries out the reaction D-erythro-1-(imidazol-4-yl)glycerol 3-phosphate = 3-(imidazol-4-yl)-2-oxopropyl phosphate + H2O. The protein operates within amino-acid biosynthesis; L-histidine biosynthesis; L-histidine from 5-phospho-alpha-D-ribose 1-diphosphate: step 6/9. The polypeptide is Imidazoleglycerol-phosphate dehydratase (HIS3) (Candida glabrata (strain ATCC 2001 / BCRC 20586 / JCM 3761 / NBRC 0622 / NRRL Y-65 / CBS 138) (Yeast)).